A 338-amino-acid chain; its full sequence is Hydroxyproline O-galactosyltransferase HPGT1 (338 aa).

Topologically, residues 1-12 (MARKGSSIRLSS) are cytoplasmic. Residues 13-32 (SRISTLLLFMFATFASFYVA) traverse the membrane as a helical; Signal-anchor for type II membrane protein segment. The Lumenal portion of the chain corresponds to 33–338 (GRLWQESQTR…WSSEAICAGV (306 aa)).

Belongs to the glycosyltransferase 31 family. Mn(2+) serves as cofactor. As to expression, expressed in roots, rosette leaves, cauline leaves, stems, flowers and siliques.

Its subcellular location is the golgi apparatus membrane. It participates in protein modification; protein glycosylation. In terms of biological role, possesses hydroxyproline O-galactosyltransferase activity. Transfers galactose from UDP-galactose to hydroxyproline residues in the arabinogalactan proteins (AGPs). Is specific for AGPs containing non-contiguous peptidyl hydroxyproline residues. The addition of galactose onto the peptidyl hydroxyproline residues in AGP core proteins represents the first committed step in arabinogalactan polysaccharide addition. AGP glycans play essential roles in both vegetative and reproductive plant growth. The sequence is that of Hydroxyproline O-galactosyltransferase HPGT1 from Arabidopsis thaliana (Mouse-ear cress).